Here is a 360-residue protein sequence, read N- to C-terminus: Peptide chain release factor 1 (360 aa).

Gln-235 carries the N5-methylglutamine modification. The tract at residues 285–313 (KRQQAEASTRRNLLGSGDRSDRNRTYNFP) is disordered.

It belongs to the prokaryotic/mitochondrial release factor family. Methylated by PrmC. Methylation increases the termination efficiency of RF1.

Its subcellular location is the cytoplasm. Its function is as follows. Peptide chain release factor 1 directs the termination of translation in response to the peptide chain termination codons UAG and UAA. In Shigella boydii serotype 18 (strain CDC 3083-94 / BS512), this protein is Peptide chain release factor 1.